We begin with the raw amino-acid sequence, 471 residues long: Putative ETHYLENE INSENSITIVE 3-like 4 protein (471 aa).

The tract at residues 280-316 (DLKISEDQDDQESSGSKRKSESMEPSKSVYTCQNSSC) is disordered. Polar residues predominate over residues 304–316 (PSKSVYTCQNSSC).

Belongs to the EIN3 family.

The protein resides in the nucleus. In terms of biological role, putative transcription factor that may be involved in the ethylene response pathway. This Arabidopsis thaliana (Mouse-ear cress) protein is Putative ETHYLENE INSENSITIVE 3-like 4 protein (EIL4).